A 245-amino-acid chain; its full sequence is Eukaryotic translation initiation factor 6 (245 aa).

Belongs to the eIF-6 family. As to quaternary structure, monomer. Associates with the 60S ribosomal subunit.

It localises to the cytoplasm. The protein resides in the nucleus. It is found in the nucleolus. Binds to the 60S ribosomal subunit and prevents its association with the 40S ribosomal subunit to form the 80S initiation complex in the cytoplasm. May also be involved in ribosome biogenesis. This is Eukaryotic translation initiation factor 6 from Drosophila melanogaster (Fruit fly).